Consider the following 66-residue polypeptide: Myrmicitoxin(1)-Pr5a (66 aa).

Positions 1–25 (MRSLYLSFSLTIIFVLVIMHAEAKA) are cleaved as a signal peptide. Positions 26 to 37 (ISEPNAIAEADP) are excised as a propeptide. V65 bears the Valine amide mark.

It belongs to the formicidae venom clade 3 family. In terms of tissue distribution, expressed by the venom gland.

It is found in the secreted. Its function is as follows. Toxin that causes a rapid and irreversible paralysis when intrathoracically injected into insects (blowflies). Does not cause spontaneous nocifensive behaviors by intraplantar injection in mice. Exhibits hemolytic and cytotoxic activities on HEK293 cells. The sequence is that of Myrmicitoxin(1)-Pr5a from Pogonomyrmex rugosus (Desert harvester ant).